Reading from the N-terminus, the 130-residue chain is Secreted cysteine-rich effector 2 (130 aa).

An N-terminal signal peptide occupies residues 1-23; it reads MLINAARLLLPAAALVHLSLAWA. Residues 68-85 form a plant immunity suppression domain region; the sequence is LKNGEDWCKHCASPRVSV.

The protein localises to the secreted. The protein resides in the host cell. It localises to the host periplasm. Functionally, secreted effector required for full virulence of U.virens. Inhibits host pathogen-associated molecular pattern-triggered immunity including flg22- and chitin-induced defense gene expression and oxidative burst. This Ustilaginoidea virens (Rice false smut fungus) protein is Secreted cysteine-rich effector 2.